We begin with the raw amino-acid sequence, 340 residues long: tRNA N6-adenosine threonylcarbamoyltransferase (340 aa).

Positions 115 and 119 each coordinate Fe cation. Substrate is bound by residues 138–142 (VVSGG), Asp171, Gly184, Asp188, and Asn278. Asp306 provides a ligand contact to Fe cation.

This sequence belongs to the KAE1 / TsaD family. Fe(2+) serves as cofactor.

Its subcellular location is the cytoplasm. The enzyme catalyses L-threonylcarbamoyladenylate + adenosine(37) in tRNA = N(6)-L-threonylcarbamoyladenosine(37) in tRNA + AMP + H(+). Functionally, required for the formation of a threonylcarbamoyl group on adenosine at position 37 (t(6)A37) in tRNAs that read codons beginning with adenine. Is involved in the transfer of the threonylcarbamoyl moiety of threonylcarbamoyl-AMP (TC-AMP) to the N6 group of A37, together with TsaE and TsaB. TsaD likely plays a direct catalytic role in this reaction. This is tRNA N6-adenosine threonylcarbamoyltransferase from Clostridium botulinum (strain Kyoto / Type A2).